A 484-amino-acid chain; its full sequence is Notoamide biosynthesis transcriptional activator notL (484 aa).

Positions 33-60 form a DNA-binding region, zn(2)-C6 fungal-type; it reads CQSCATSKIKCPKEKTSCSKCQARGIEC. 2 disordered regions span residues 70–154 and 363–387; these read RRRE…NNSV and GGGE…QMRP. Positions 76–122 are enriched in low complexity; sequence TGHPTSCTSTSTTANSSSSSSRSSNSSSSSSTSPPSSSSSLSSNPEP. The segment covering 123-133 has biased composition (basic and acidic residues); sequence TSDKDLPRPRS. 2 stretches are compositionally biased toward polar residues: residues 139-154 and 368-378; these read ANST…NNSV and DTGQRPATSMI.

Its subcellular location is the nucleus. Functionally, transcription factor that probably regulates the expression of the gene cluster that mediates the biosynthesis of notoamide, a fungal indole alkaloid that belongs to a family of natural products containing a characteristic bicyclo[2.2.2]diazaoctane core. The protein is Notoamide biosynthesis transcriptional activator notL of Aspergillus sp. (strain MF297-2).